The following is a 76-amino-acid chain: Conotoxin VnMEKL-0111 (76 aa).

Positions 1–18 are cleaved as a signal peptide; it reads MKLTILFLVAAVLMSTQA. The propeptide occupies 19-45; sequence LIQHDGEKSQKAKMKFLTARTLSAKTR. Intrachain disulfides connect Cys49–Cys65, Cys56–Cys70, and Cys64–Cys74.

It belongs to the conotoxin O2 superfamily. Expressed by the venom duct.

It is found in the secreted. This is Conotoxin VnMEKL-0111 from Conus ventricosus (Mediterranean cone).